The primary structure comprises 42 residues: Photosystem I reaction center subunit IX (42 aa).

Residues 7–27 traverse the membrane as a helical segment; it reads FLSTAPVLIMALLTVTAGILI.

It belongs to the PsaJ family.

It is found in the cellular thylakoid membrane. May help in the organization of the PsaE and PsaF subunits. The polypeptide is Photosystem I reaction center subunit IX (Crocosphaera subtropica (strain ATCC 51142 / BH68) (Cyanothece sp. (strain ATCC 51142))).